A 122-amino-acid chain; its full sequence is MPRIIGIDIPAKKKLKISLTYIYGIGSARSDEIIKKLKLDPEARASELTEEEVGRLNSLLQSEYTVEGDLRRRVQSDIKRLIAIHSYRGQRHRLSLPVRGQRTKTNSRTRKGKRKTVAGKKK.

The interval 93-122 (RLSLPVRGQRTKTNSRTRKGKRKTVAGKKK) is disordered. Basic residues predominate over residues 101-122 (QRTKTNSRTRKGKRKTVAGKKK).

Belongs to the universal ribosomal protein uS13 family. As to quaternary structure, part of the 30S ribosomal subunit. Forms a loose heterodimer with protein S19. Forms two bridges to the 50S subunit in the 70S ribosome.

In terms of biological role, located at the top of the head of the 30S subunit, it contacts several helices of the 16S rRNA. In the 70S ribosome it contacts the 23S rRNA (bridge B1a) and protein L5 of the 50S subunit (bridge B1b), connecting the 2 subunits; these bridges are implicated in subunit movement. Contacts the tRNAs in the A and P-sites. This Chlamydia pneumoniae (Chlamydophila pneumoniae) protein is Small ribosomal subunit protein uS13.